Consider the following 365-residue polypeptide: Chorismate synthase (365 aa).

NADP(+) is bound at residue Arg-46. FMN contacts are provided by residues 123–125 (RSS), 241–242 (NG), Gly-281, 296–300 (KPTPS), and Arg-322.

This sequence belongs to the chorismate synthase family. In terms of assembly, homotetramer. FMNH2 serves as cofactor.

It carries out the reaction 5-O-(1-carboxyvinyl)-3-phosphoshikimate = chorismate + phosphate. Its pathway is metabolic intermediate biosynthesis; chorismate biosynthesis; chorismate from D-erythrose 4-phosphate and phosphoenolpyruvate: step 7/7. Catalyzes the anti-1,4-elimination of the C-3 phosphate and the C-6 proR hydrogen from 5-enolpyruvylshikimate-3-phosphate (EPSP) to yield chorismate, which is the branch point compound that serves as the starting substrate for the three terminal pathways of aromatic amino acid biosynthesis. This reaction introduces a second double bond into the aromatic ring system. The polypeptide is Chorismate synthase (Helicobacter pylori (strain G27)).